We begin with the raw amino-acid sequence, 181 residues long: Secreted chorismate mutase (181 aa).

The first 20 residues, methionine 1–alanine 20, serve as a signal peptide directing secretion. The region spanning aspartate 21–phenylalanine 100 is the Chorismate mutase domain. Residues arginine 36, lysine 47, aspartate 56, arginine 59–valine 63, threonine 92–glutamate 96, and arginine 121 contribute to the substrate site. Cysteine 147 and cysteine 180 form a disulfide bridge.

As to quaternary structure, homodimer.

Its subcellular location is the secreted. It carries out the reaction chorismate = prephenate. The protein operates within metabolic intermediate biosynthesis; prephenate biosynthesis; prephenate from chorismate: step 1/1. Its function is as follows. Catalyzes the Claisen rearrangement of chorismate to prephenate. May play some role in the pathogenicity. In Mycolicibacterium smegmatis (strain ATCC 700084 / mc(2)155) (Mycobacterium smegmatis), this protein is Secreted chorismate mutase.